Here is a 326-residue protein sequence, read N- to C-terminus: Serine protease 38 (326 aa).

The signal sequence occupies residues 1–32 (MAAPASVMGPLGPSALGLLLLLLVVAPPRVAA). The propeptide at 33–59 (LVHRQPENQGISLTGSVACGRPSMEGK) is activation peptide. A Peptidase S1 domain is found at 60–293 (ILGGVPAPER…FSKWICDNIE (234 aa)). The cysteines at positions 85 and 101 are disulfide-linked. His100 acts as the Charge relay system in catalysis. Asn125 is a glycosylation site (N-linked (GlcNAc...) asparagine). Asp150 acts as the Charge relay system in catalysis. 3 disulfides stabilise this stretch: Cys183/Cys251, Cys214/Cys230, and Cys241/Cys269. Residue Ser245 is the Charge relay system of the active site.

It belongs to the peptidase S1 family.

Its subcellular location is the secreted. The chain is Serine protease 38 (PRSS38) from Homo sapiens (Human).